A 674-amino-acid polypeptide reads, in one-letter code: Carcinine transporter (674 aa).

The Cytoplasmic portion of the chain corresponds to 1-53 (MSDIEDNDGDEYDELSELRQRHKPESQPSVDEAFDLDDLLPTIGEFGKYQKLL). Residues 54–74 (VFGICLPACIPCGFCAFNQLF) traverse the membrane as a helical segment. The Extracellular portion of the chain corresponds to 75 to 178 (MADTPDDYWC…DLVCDQDIYP (104 aa)). Residues N122, N141, and N156 are each glycosylated (N-linked (GlcNAc...) asparagine). Residues 179-199 (TIGLAALNTGGPVGVYLFGLL) traverse the membrane as a helical segment. The Cytoplasmic portion of the chain corresponds to 200 to 206 (NDRGGRR). A helical membrane pass occupies residues 207-227 (LSYFVCLATLLAGSLMTSLSK). The Extracellular portion of the chain corresponds to 228–236 (DFWTWAGSR). The helical transmembrane segment at 237–257 (VIVGLTIPAVYQIPFIISLEL) threads the bilayer. The Cytoplasmic segment spans residues 258 to 264 (VGENYRS). The helical transmembrane segment at 265-285 (FVTVMTCTFYTSGIMLLSGVT) threads the bilayer. Residues 286 to 293 (YLERDWVR) lie on the Extracellular side of the membrane. A helical transmembrane segment spans residues 294-314 (LSYITSLPFYAYFLYMFVMPE). The Cytoplasmic segment spans residues 315-385 (SPRWLLMRGR…CRTPNMRLKT (71 aa)). The helical transmembrane segment at 386-406 (ILITLSWFANETVYLGLSYYG) threads the bilayer. Residues 407–414 (PALGTNQY) are Extracellular-facing. A helical membrane pass occupies residues 415–435 (VSFFLSAVVELPSYLCCWYFM). Over 436-441 (DTWGRR) the chain is Cytoplasmic. The helical transmembrane segment at 442–462 (WPLSLSMILGGVACVITVMLP) threads the bilayer. Over 463-469 (DDAVDET) the chain is Extracellular. The chain crosses the membrane as a helical span at residues 470 to 490 (LVLYLVSKALLSASFLIIYPF). Over 491 to 500 (AGELYPTQVR) the chain is Cytoplasmic. The helical transmembrane segment at 501–521 (GIGIGASSYIGGLGLIGIPFI) threads the bilayer. Residues 522–527 (TYLGKD) lie on the Extracellular side of the membrane. The helical transmembrane segment at 528 to 548 (NLKLPLVIMGFLSMLGGMTGL) threads the bilayer. Residues 549-674 (RLPETLHHRL…DGTMQLTHWI (126 aa)) lie on the Cytoplasmic side of the membrane. The span at 614–631 (RDSRRVREPAPRIDERTP) shows a compositional bias: basic and acidic residues. The tract at residues 614 to 647 (RDSRRVREPAPRIDERTPLDTTASGSGRPVHRPS) is disordered.

It belongs to the major facilitator (TC 2.A.1) superfamily. Organic cation transporter (TC 2.A.1.19) family. Expressed in photoreceptor cells.

Its subcellular location is the cell membrane. The protein resides in the cell projection. The protein localises to the axon. Functionally, carcinine transporter which is required for recycling of the neurotransmitter histamine in photoreceptor neurons of the compound eye. Following histamine release from photoreceptors and its uptake by glia where it is converted to carcinine, required for the uptake of carcinine from glia into photoreceptor cells where it can be hydrolyzed by tan to form histamine and beta-alanine. The chain is Carcinine transporter from Drosophila melanogaster (Fruit fly).